The primary structure comprises 462 residues: Metal cation symporter ZIP8 (462 aa).

A signal peptide spans 1-19; sequence MAPGRAVAGLLLLAATSLG. Residues 20–132 are Extracellular-facing; it reads HPSEGPELAF…PSLSEVWGYG (113 aa). N-linked (GlcNAc...) asparagine glycans are attached at residues Asn-40, Asn-88, and Asn-96. A helical membrane pass occupies residues 133–153; sequence FLSVTIINLASLLGLILTPLI. Topologically, residues 154–160 are cytoplasmic; that stretch reads KKSYFPK. Residues 161–181 form a helical membrane-spanning segment; it reads ILTYFVGLAIGTLFSNAIFQL. Residues 182–191 lie on the Extracellular side of the membrane; the sequence is IPEAFGFNPK. A helical transmembrane segment spans residues 192-212; it reads IDNYVEKAVAVFGGFYMLFFV. Residues 213–367 are Cytoplasmic-facing; the sequence is ERTLKMLLKT…LNAGMSTRQA (155 aa). An XEXPHE-motif motif is present at residues 345 to 350; that stretch reads EEFPHE. A helical transmembrane segment spans residues 368–388; sequence LLFNFLSACSCYVGLAFGILV. The Extracellular portion of the chain corresponds to 389-390; that stretch reads GN. The helical transmembrane segment at 391–411 threads the bilayer; the sequence is NFAPNIIFALAGGMFLYISLA. The Cytoplasmic segment spans residues 412 to 431; sequence DMFPEMNDMLREKVTGRQTD. The chain crosses the membrane as a helical span at residues 432-452; sequence FTFFMIQNAGMLTGFTAILLI. Residues 453–462 are Extracellular-facing; the sequence is TLYAGDIELQ.

Belongs to the ZIP transporter (TC 2.A.5) family. Homodimer. In terms of processing, N-glycosylated. N-glycosylation is not required for proper iron and zinc transport. In terms of tissue distribution, ubiquitously expressed.

The protein localises to the cell membrane. It is found in the apical cell membrane. It localises to the basolateral cell membrane. Its subcellular location is the lysosome membrane. It carries out the reaction Zn(2+)(out) + 2 hydrogencarbonate(out) = Zn(2+)(in) + 2 hydrogencarbonate(in). The catalysed reaction is selenite(out) + Zn(2+)(out) + hydrogencarbonate(out) = selenite(in) + Zn(2+)(in) + hydrogencarbonate(in). The enzyme catalyses Mn(2+)(out) + 2 hydrogencarbonate(out) = Mn(2+)(in) + 2 hydrogencarbonate(in). It catalyses the reaction Cd(2+)(out) + 2 hydrogencarbonate(out) = Cd(2+)(in) + 2 hydrogencarbonate(in). It carries out the reaction Fe(2+)(out) + 2 hydrogencarbonate(out) = Fe(2+)(in) + 2 hydrogencarbonate(in). The catalysed reaction is Co(2+)(out) + 2 hydrogencarbonate(out) = Co(2+)(in) + 2 hydrogencarbonate(in). In terms of biological role, electroneutral divalent metal cation:bicarbonate symporter of the plasma membrane mediating the cellular uptake of zinc and manganese, two divalent metal cations important for development, tissue homeostasis and immunity. Transports an electroneutral complex composed of a divalent metal cation and two bicarbonate anions or alternatively a bicarbonate and a selenite anion. Thereby, it also contributes to the cellular uptake of selenium, an essential trace metal and micronutrient. Also imports cadmium a non-essential metal which is cytotoxic and carcinogenic. May also transport iron and cobalt through membranes. Through zinc import, indirectly regulates the metal-dependent transcription factor MTF1 and the expression of some metalloproteases involved in cartilage catabolism and also probably heart development. Also indirectly regulates the expression of proteins involved in cell morphology and cytoskeleton organization. Indirectly controls innate immune function and inflammatory response by regulating zinc cellular uptake which in turn modulates the expression of genes specific of these processes. Protects, for instance, cells from injury and death at the onset of inflammation. By regulating zinc influx into monocytes also directly modulates their adhesion to endothelial cells and arteries. Reclaims manganese from the bile at the apical membrane of hepatocytes, thereby regulating the activity of the manganese-dependent enzymes through the systemic levels of the nutrient. Also participates in manganese reabsorption in the proximal tubule of the kidney. By mediating the extracellular uptake of manganese by cells of the blood-brain barrier, may also play a role in the transport of the micronutrient to the brain. With manganese cellular uptake also participates in mitochondrial proper function. Finally, also probably functions intracellularly, translocating zinc from lysosome to cytosol to indirectly enhance the expression of specific genes during TCR-mediated T cell activation. The sequence is that of Metal cation symporter ZIP8 from Mus musculus (Mouse).